We begin with the raw amino-acid sequence, 250 residues long: NAD-dependent protein deacetylase 2 (250 aa).

Residues 4–250 (MDSKNLFKKA…LRNIWNLIKS (247 aa)) enclose the Deacetylase sirtuin-type domain. The NAD(+) site is built by Ala29, Thr33, Phe40, Arg41, Gln107, Ile109, Asp110, and His125. Phe40 serves as a coordination point for nicotinamide. Ile109 and Asp110 together coordinate nicotinamide. The active-site Proton acceptor is the His125. The Zn(2+) site is built by Cys133, Cys136, Cys158, and Cys161. 3 residues coordinate NAD(+): Ser198, Ser199, and Asn219.

Belongs to the sirtuin family. Class U subfamily. The cofactor is Zn(2+).

It localises to the cytoplasm. It carries out the reaction N(6)-acetyl-L-lysyl-[protein] + NAD(+) + H2O = 2''-O-acetyl-ADP-D-ribose + nicotinamide + L-lysyl-[protein]. Functionally, NAD-dependent protein deacetylase which modulates the activities of several enzymes which are inactive in their acetylated form. The protein is NAD-dependent protein deacetylase 2 of Caldanaerobacter subterraneus subsp. tengcongensis (strain DSM 15242 / JCM 11007 / NBRC 100824 / MB4) (Thermoanaerobacter tengcongensis).